A 117-amino-acid polypeptide reads, in one-letter code: Immunoglobulin heavy variable 3-74 (117 aa).

The signal sequence occupies residues 1 to 19 (MEFGLSWVFLVAILKGVQC). The interval 20–44 (EVQLVESGGGLVQPGGSLRLSCAAS) is framework-1. Residues 20 to 117 (EVQLVESGGG…EDTAVYYCAR (98 aa)) enclose the Ig-like domain. Cysteines 41 and 115 form a disulfide. Positions 45–52 (GFTFSSYW) are complementarity-determining-1. The interval 53-69 (MHWVRQAPGKGLVWVSR) is framework-2. Positions 70-77 (INSDGSST) are complementarity-determining-2. Positions 78–115 (SYADSVKGRFTISRDNAKNTLYLQMNSLRAEDTAVYYC) are framework-3. Residues 116-117 (AR) form a complementarity-determining-3 region.

Immunoglobulins are composed of two identical heavy chains and two identical light chains; disulfide-linked.

The protein localises to the secreted. It is found in the cell membrane. Functionally, v region of the variable domain of immunoglobulin heavy chains that participates in the antigen recognition. Immunoglobulins, also known as antibodies, are membrane-bound or secreted glycoproteins produced by B lymphocytes. In the recognition phase of humoral immunity, the membrane-bound immunoglobulins serve as receptors which, upon binding of a specific antigen, trigger the clonal expansion and differentiation of B lymphocytes into immunoglobulins-secreting plasma cells. Secreted immunoglobulins mediate the effector phase of humoral immunity, which results in the elimination of bound antigens. The antigen binding site is formed by the variable domain of one heavy chain, together with that of its associated light chain. Thus, each immunoglobulin has two antigen binding sites with remarkable affinity for a particular antigen. The variable domains are assembled by a process called V-(D)-J rearrangement and can then be subjected to somatic hypermutations which, after exposure to antigen and selection, allow affinity maturation for a particular antigen. This Homo sapiens (Human) protein is Immunoglobulin heavy variable 3-74.